Here is a 459-residue protein sequence, read N- to C-terminus: Argininosuccinate lyase (459 aa).

Belongs to the lyase 1 family. Argininosuccinate lyase subfamily.

The protein resides in the cytoplasm. It catalyses the reaction 2-(N(omega)-L-arginino)succinate = fumarate + L-arginine. It functions in the pathway amino-acid biosynthesis; L-arginine biosynthesis; L-arginine from L-ornithine and carbamoyl phosphate: step 3/3. The polypeptide is Argininosuccinate lyase (Buchnera aphidicola subsp. Schizaphis graminum (strain Sg)).